The primary structure comprises 380 residues: Cytochrome b (380 aa).

4 helical membrane-spanning segments follow: residues F34–M54, W78–I99, W114–L134, and F179–T199. Residues H84 and H98 each contribute to the heme b site. Residues H183 and H197 each contribute to the heme b site. Residue H202 participates in a ubiquinone binding. A run of 4 helical transmembrane segments spans residues L227–T247, L289–H309, L321–S341, and F348–P368.

This sequence belongs to the cytochrome b family. As to quaternary structure, the cytochrome bc1 complex contains 11 subunits: 3 respiratory subunits (MT-CYB, CYC1 and UQCRFS1), 2 core proteins (UQCRC1 and UQCRC2) and 6 low-molecular weight proteins (UQCRH/QCR6, UQCRB/QCR7, UQCRQ/QCR8, UQCR10/QCR9, UQCR11/QCR10 and a cleavage product of UQCRFS1). This cytochrome bc1 complex then forms a dimer. The cofactor is heme b.

Its subcellular location is the mitochondrion inner membrane. Functionally, component of the ubiquinol-cytochrome c reductase complex (complex III or cytochrome b-c1 complex) that is part of the mitochondrial respiratory chain. The b-c1 complex mediates electron transfer from ubiquinol to cytochrome c. Contributes to the generation of a proton gradient across the mitochondrial membrane that is then used for ATP synthesis. This Herpetotheres cachinnans (Laughing falcon) protein is Cytochrome b (MT-CYB).